The primary structure comprises 614 residues: DNA repair protein rad26 (614 aa).

Residues 29–43 (QAQTQVQAQSSQVVV) show a composition bias toward low complexity. 2 disordered regions span residues 29–76 (QAQT…QASL) and 157–214 (KKMK…TAED). 2 stretches are compositionally biased toward polar residues: residues 50–76 (QNLN…QASL) and 181–190 (LLSSSDQLAK). Basic residues predominate over residues 191–207 (STKHAAKNSPSKKKRKT).

Interacts with cds1.

It is found in the nucleus. Involved in cell cycle arrest when DNA synthesis is inhibited by hydroxyurea, and in mitosis arrest after treatment with DNA-damaging agents. This protein is S phase-specific. The chain is DNA repair protein rad26 (rad26) from Schizosaccharomyces pombe (strain 972 / ATCC 24843) (Fission yeast).